The following is a 509-amino-acid chain: Cytochrome P450 4A10 (509 aa).

A run of 2 helical transmembrane segments spans residues 15-35 (LSGF…VKAV) and 121-141 (LLAP…WFQH). Heme is bound at residue glutamate 320. A Phosphoserine modification is found at serine 439. Position 456 (cysteine 456) interacts with heme.

The protein belongs to the cytochrome P450 family. It depends on heme as a cofactor. As to expression, highly expressed in the kidneys of both genders.

It is found in the endoplasmic reticulum membrane. It localises to the microsome membrane. It carries out the reaction an omega-methyl-long-chain fatty acid + reduced [NADPH--hemoprotein reductase] + O2 = an omega-hydroxy-long-chain fatty acid + oxidized [NADPH--hemoprotein reductase] + H2O + H(+). The enzyme catalyses dodecanoate + reduced [NADPH--hemoprotein reductase] + O2 = 12-hydroxydodecanoate + oxidized [NADPH--hemoprotein reductase] + H2O + H(+). It catalyses the reaction dodecanoate + reduced [NADPH--hemoprotein reductase] + O2 = 11-hydroxydodecanoate + oxidized [NADPH--hemoprotein reductase] + H2O + H(+). The catalysed reaction is tetradecanoate + reduced [NADPH--hemoprotein reductase] + O2 = 14-hydroxytetradecanoate + oxidized [NADPH--hemoprotein reductase] + H2O + H(+). It carries out the reaction hexadecanoate + reduced [NADPH--hemoprotein reductase] + O2 = 16-hydroxyhexadecanoate + oxidized [NADPH--hemoprotein reductase] + H2O + H(+). The enzyme catalyses (9Z)-octadecenoate + reduced [NADPH--hemoprotein reductase] + O2 = 18-hydroxy-(9Z)-octadecenoate + oxidized [NADPH--hemoprotein reductase] + H2O + H(+). It catalyses the reaction (9Z,12Z)-octadecadienoate + reduced [NADPH--hemoprotein reductase] + O2 = 18-hydroxy-(9Z,12Z)-octadecadienoate + oxidized [NADPH--hemoprotein reductase] + H2O + H(+). The catalysed reaction is (9Z,12Z)-octadecadienoate + reduced [NADPH--hemoprotein reductase] + O2 = 17-hydroxy-(9Z,12Z)-octadecadienoate + oxidized [NADPH--hemoprotein reductase] + H2O + H(+). It carries out the reaction (5Z,8Z,11Z,14Z)-eicosatetraenoate + reduced [NADPH--hemoprotein reductase] + O2 = 20-hydroxy-(5Z,8Z,11Z,14Z)-eicosatetraenoate + oxidized [NADPH--hemoprotein reductase] + H2O + H(+). The enzyme catalyses 8,9-epoxy-(5Z,11Z,14Z)-eicosatrienoate + reduced [NADPH--hemoprotein reductase] + O2 = 20-hydroxy-8,9-epoxy-(5Z,11Z,14Z)-eicosatrienoate + oxidized [NADPH--hemoprotein reductase] + H2O + H(+). Its function is as follows. A cytochrome P450 monooxygenase involved in the metabolism of fatty acids. Catalyzes predominantly the oxidation of the terminal carbon (omega-oxidation) of long-chain fatty acids. Acts as a major omega-hydroxylase for dodecanoic (lauric) acid in liver. In kidney, may play an important role in omega-hydroxylation of (5Z,8Z,11Z,14Z)-eicosatetraenoic acid (arachidonate) to 20-hydroxyeicosatetraenoic acid (20-HETE), a signaling molecule acting both as vasoconstrictive and natriuretic with overall effect on arterial blood pressure. Also participates in the formation of anti-inflammatory hydroxyepoxyeicosatrienoic acids (HEETs) in kidney by converting 8,9-epoxyeicosatrienoic acid (EET) to 20,8,9-HEET, an activator of PPARA. Displays substantially lower fatty acid omega-1 hydroxylase activity. Mechanistically, uses molecular oxygen inserting one oxygen atom into a substrate, and reducing the second into a water molecule, with two electrons provided by NADPH via cytochrome P450 reductase (CPR; NADPH-ferrihemoprotein reductase). This chain is Cytochrome P450 4A10, found in Mus musculus (Mouse).